The following is a 615-amino-acid chain: DNA mismatch repair protein MutL (615 aa).

Residues 370 to 397 (EPVAPRYTPAPASGSRPAAPWPNTQPGY) are disordered. Positions 378-391 (PAPASGSRPAAPWP) are enriched in low complexity.

The protein belongs to the DNA mismatch repair MutL/HexB family.

Its function is as follows. This protein is involved in the repair of mismatches in DNA. It is required for dam-dependent methyl-directed DNA mismatch repair. May act as a 'molecular matchmaker', a protein that promotes the formation of a stable complex between two or more DNA-binding proteins in an ATP-dependent manner without itself being part of a final effector complex. This is DNA mismatch repair protein MutL from Shigella dysenteriae serotype 1 (strain Sd197).